The following is a 214-amino-acid chain: External core antigen (214 aa).

An N-terminal signal peptide occupies residues 1–19 (MQLFHLCLIISCTCPTVQA). Residues 25 to 27 (GWL) form an HBEAG region. Positions 165–214 (NAPILSTLPETTVVRRRDRGRSPRRRTPSPRRRRSQSPRRRRSQSRESQC) are disordered. The segment covering 178-207 (VRRRDRGRSPRRRTPSPRRRRSQSPRRRRS) has biased composition (basic residues). One copy of the 1; half-length repeat lies at 186–192 (SPRRRTP). Residues 186 to 208 (SPRRRTPSPRRRRSQSPRRRRSQ) form a 3 X 8 AA repeats of S-P-R-R-R-R-S-Q region. Positions 186 to 214 (SPRRRTPSPRRRRSQSPRRRRSQSRESQC) are excised as a propeptide. 2 repeat units span residues 193–200 (SPRRRRSQ) and 201–208 (SPRRRRSQ).

The protein belongs to the orthohepadnavirus precore antigen family. Homodimerizes. In terms of processing, phosphorylated. Cleaved by host furin.

It localises to the secreted. The protein localises to the host nucleus. May regulate immune response to the intracellular capsid in acting as a T-cell tolerogen, by having an immunoregulatory effect which prevents destruction of infected cells by cytotoxic T-cells. This immune regulation may predispose to chronicity during perinatal infections and prevent severe liver injury during adult infections. This chain is External core antigen, found in Hepatitis B virus genotype A2 (isolate Japan/11D11HCCW/1998) (HBV-A).